We begin with the raw amino-acid sequence, 393 residues long: S-adenosylmethionine synthase (393 aa).

E9 is a binding site for Mg(2+). H15 contributes to the ATP binding site. A K(+)-binding site is contributed by E43. L-methionine contacts are provided by E56 and Q99. Residues 167–169 (DGK), 235–238 (SGRF), D246, 252–253 (RK), A269, K273, and K277 each bind ATP. Position 246 (D246) interacts with L-methionine. K277 serves as a coordination point for L-methionine.

The protein belongs to the AdoMet synthase family. Homotetramer. The cofactor is Mn(2+). It depends on Mg(2+) as a cofactor. Co(2+) serves as cofactor. Requires K(+) as cofactor.

It localises to the cytoplasm. It carries out the reaction L-methionine + ATP + H2O = S-adenosyl-L-methionine + phosphate + diphosphate. It functions in the pathway amino-acid biosynthesis; S-adenosyl-L-methionine biosynthesis; S-adenosyl-L-methionine from L-methionine: step 1/1. Functionally, catalyzes the formation of S-adenosylmethionine from methionine and ATP. The reaction comprises two steps that are both catalyzed by the same enzyme: formation of S-adenosylmethionine (AdoMet) and triphosphate, and subsequent hydrolysis of the triphosphate. The sequence is that of S-adenosylmethionine synthase (SAM) from Camellia sinensis (Tea plant).